The primary structure comprises 501 residues: Ribose import ATP-binding protein RbsA (501 aa).

ABC transporter domains are found at residues 5–241 and 252–498; these read LSLE…VGRK and LRND…TGGV. ATP is bound at residue 37–44; the sequence is GENGAGKS.

This sequence belongs to the ABC transporter superfamily. Ribose importer (TC 3.A.1.2.1) family. The complex is composed of an ATP-binding protein (RbsA), two transmembrane proteins (RbsC) and a solute-binding protein (RbsB).

Its subcellular location is the cell inner membrane. The catalysed reaction is D-ribose(out) + ATP + H2O = D-ribose(in) + ADP + phosphate + H(+). In terms of biological role, part of the ABC transporter complex RbsABC involved in ribose import. Responsible for energy coupling to the transport system. The protein is Ribose import ATP-binding protein RbsA of Hahella chejuensis (strain KCTC 2396).